The sequence spans 269 residues: Proenkephalin-A (269 aa).

Positions 1 to 24 are cleaved as a signal peptide; that stretch reads MAQFLRLCIWLLALGSCLLATVQA. 3 disulfide bridges follow: C26/C48, C30/C52, and C33/C65. The tract at residues 165-191 is disordered; it reads DNRAKDSHQQESTNNDEDSTSKRYGGF. 2 propeptides span residues 198–209 and 219–229; these read SPQLEDEAKELQ and VGRPEWWMDYQ. S253 is modified (phosphoserine).

The protein belongs to the opioid neuropeptide precursor family. Proenkephalin-A is cleaved by CTSL to generate Met-enkephalin. In terms of processing, processed and degraded by ACE. Post-translationally, probably cleaved by ACE. Processed by ACE to generate Met-enkephalin in the nucleus accumbens of the brain. In terms of processing, the N-terminal domain contains 6 conserved cysteines thought to be involved in disulfide bonding and/or processing. In terms of tissue distribution, expressed in brain, heart and testis.

The protein localises to the secreted. It is found in the cytoplasmic vesicle. Its subcellular location is the secretory vesicle. It localises to the chromaffin granule lumen. Its function is as follows. Neuropeptide that competes with and mimic the effects of opiate drugs. They play a role in a number of physiologic functions, including pain perception and responses to stress. Met-enkephalin-Arg-Phe neuropeptide acts as a strong ligand of Mu-type opioid receptor OPRM1. Met-enkephalin-Arg-Phe-binding to OPRM1 in the nucleus accumbens of the brain increases activation of OPRM1, leading to long-term synaptic depression of glutamate release. Functionally, increases glutamate release in the striatum and decreases GABA concentration in the striatum. In terms of biological role, increases glutamate release in the striatum. The polypeptide is Proenkephalin-A (Penk) (Rattus norvegicus (Rat)).